We begin with the raw amino-acid sequence, 274 residues long: Acetyl-coenzyme A carboxylase carboxyl transferase subunit alpha (274 aa).

One can recognise a CoA carboxyltransferase C-terminal domain in the interval 2 to 250 (NKEFIKSIVV…KKEIMNAMNE (249 aa)).

The protein belongs to the AccA family. In terms of assembly, acetyl-CoA carboxylase is a heterohexamer composed of biotin carboxyl carrier protein (AccB), biotin carboxylase (AccC) and two subunits each of ACCase subunit alpha (AccA) and ACCase subunit beta (AccD).

It is found in the cytoplasm. It catalyses the reaction N(6)-carboxybiotinyl-L-lysyl-[protein] + acetyl-CoA = N(6)-biotinyl-L-lysyl-[protein] + malonyl-CoA. It functions in the pathway lipid metabolism; malonyl-CoA biosynthesis; malonyl-CoA from acetyl-CoA: step 1/1. Component of the acetyl coenzyme A carboxylase (ACC) complex. First, biotin carboxylase catalyzes the carboxylation of biotin on its carrier protein (BCCP) and then the CO(2) group is transferred by the carboxyltransferase to acetyl-CoA to form malonyl-CoA. In Clostridium botulinum (strain Alaska E43 / Type E3), this protein is Acetyl-coenzyme A carboxylase carboxyl transferase subunit alpha.